Consider the following 317-residue polypeptide: Retinol dehydrogenase 16 (317 aa).

33–57 (FITGCDSGFGKLLARQLDARGLRVL) contributes to the NAD(+) binding site. Substrate is bound at residue serine 164. Tyrosine 176 (proton acceptor) is an active-site residue. A helical transmembrane segment spans residues 289 to 309 (LLYLPMSYMPTFLVDAIMYWV).

Belongs to the short-chain dehydrogenases/reductases (SDR) family. As to quaternary structure, homodimer. In terms of processing, not N-glycosylated. In terms of tissue distribution, highly expressed in adult liver (at protein level). Detected in endometrium, liver and foreskin. Detected in the spineous layers of adult skin, and at lower levels in basal and granular skin layers. Detected in fetal liver and lung.

The protein resides in the microsome membrane. Its subcellular location is the endoplasmic reticulum membrane. It carries out the reaction all-trans-retinol--[retinol-binding protein] + NAD(+) = all-trans-retinal--[retinol-binding protein] + NADH + H(+). It catalyses the reaction all-trans-retinol + NAD(+) = all-trans-retinal + NADH + H(+). The enzyme catalyses 13-cis-retinol + NAD(+) = 13-cis-retinal + NADH + H(+). The catalysed reaction is 11-cis-retinol + NAD(+) = 11-cis-retinal + NADH + H(+). It carries out the reaction 9-cis-retinol + NAD(+) = 9-cis-retinal + NADH + H(+). It catalyses the reaction 5alpha-androstane-3alpha,17beta-diol + NAD(+) = 17beta-hydroxy-5alpha-androstan-3-one + NADH + H(+). The enzyme catalyses androsterone + NAD(+) = 5alpha-androstan-3,17-dione + NADH + H(+). It participates in cofactor metabolism; retinol metabolism. Inhibited by citral, perillyl alcohol, geraniol, farnesol and geranyl geraniol. Its function is as follows. Oxidoreductase with a preference for NAD. Oxidizes all-trans-retinol, 9-cis-retinol, 11-cis-retinol and 13-cis-retinol to the corresponding aldehydes. Has higher activity towards CRBP-bound retinol than with free retinol. Also oxidizes 3-alpha-hydroxysteroids. Oxidizes androstanediol and androsterone to dihydrotestosterone and androstanedione. Can also catalyze the reverse reaction. This Homo sapiens (Human) protein is Retinol dehydrogenase 16.